The following is a 220-amino-acid chain: Glycerol-3-phosphate acyltransferase (220 aa).

A run of 6 helical transmembrane segments spans residues 11-31, 70-90, 96-116, 127-147, 153-173, and 192-212; these read INVI…GYAL, LLVL…SKLF, LQWM…FLNF, GSVV…WFFV, ISSL…FFVP, and PMVL…FNLL.

The protein belongs to the PlsY family. Probably interacts with PlsX.

It localises to the cell inner membrane. It catalyses the reaction an acyl phosphate + sn-glycerol 3-phosphate = a 1-acyl-sn-glycero-3-phosphate + phosphate. It participates in lipid metabolism; phospholipid metabolism. Functionally, catalyzes the transfer of an acyl group from acyl-phosphate (acyl-PO(4)) to glycerol-3-phosphate (G3P) to form lysophosphatidic acid (LPA). This enzyme utilizes acyl-phosphate as fatty acyl donor, but not acyl-CoA or acyl-ACP. The protein is Glycerol-3-phosphate acyltransferase of Helicobacter pylori (strain J99 / ATCC 700824) (Campylobacter pylori J99).